The primary structure comprises 474 residues: Ribulose bisphosphate carboxylase large chain (474 aa).

Lysine 13 carries the N6,N6,N6-trimethyllysine modification. Substrate-binding residues include asparagine 122 and threonine 172. The active-site Proton acceptor is the lysine 174. A substrate-binding site is contributed by lysine 176. Residues lysine 200, aspartate 202, and glutamate 203 each contribute to the Mg(2+) site. Lysine 200 is modified (N6-carboxylysine). The active-site Proton acceptor is the histidine 293. Substrate-binding residues include arginine 294, histidine 326, and serine 378.

The protein belongs to the RuBisCO large chain family. Type I subfamily. In terms of assembly, heterohexadecamer of 8 large chains and 8 small chains; disulfide-linked. The disulfide link is formed within the large subunit homodimers. The cofactor is Mg(2+). The disulfide bond which can form in the large chain dimeric partners within the hexadecamer appears to be associated with oxidative stress and protein turnover.

It localises to the plastid. The protein resides in the chloroplast. The catalysed reaction is 2 (2R)-3-phosphoglycerate + 2 H(+) = D-ribulose 1,5-bisphosphate + CO2 + H2O. It catalyses the reaction D-ribulose 1,5-bisphosphate + O2 = 2-phosphoglycolate + (2R)-3-phosphoglycerate + 2 H(+). Its function is as follows. RuBisCO catalyzes two reactions: the carboxylation of D-ribulose 1,5-bisphosphate, the primary event in carbon dioxide fixation, as well as the oxidative fragmentation of the pentose substrate in the photorespiration process. Both reactions occur simultaneously and in competition at the same active site. This chain is Ribulose bisphosphate carboxylase large chain, found in Dendrophthora clavata (Columbian mistletoe).